An 815-amino-acid polypeptide reads, in one-letter code: (-)-kolavenyl diphosphate synthase TPS28, chloroplastic (815 aa).

The transit peptide at 1-51 (MFMSSSSSSHARRPQLSSFSYLHPPLPFPGLSFFNTRDKRVNFDSTRIICI) directs the protein to the chloroplast. K247 contributes to the substrate binding site. D379 and D381 together coordinate Mg(2+). The DXDD motif motif lies at 379 to 382 (DIDD). Position 465 (K465) interacts with substrate.

Belongs to the terpene synthase family. Tpsc subfamily. Mg(2+) serves as cofactor.

Its subcellular location is the plastid. The protein localises to the chloroplast. It catalyses the reaction (2E,6E,10E)-geranylgeranyl diphosphate = (-)-kolavenyl diphosphate. Its activity is regulated as follows. Inhibited by high concentrations of magnesium. In terms of biological role, diterpene synthase that catalyzes the formation of (-)-kolavenyl diphosphate from geranylgeranyl diphosphate (GGPP). In Tripterygium wilfordii (Thunder God vine), this protein is (-)-kolavenyl diphosphate synthase TPS28, chloroplastic.